The following is a 195-amino-acid chain: MAFVLSLLMALVLVSYGPGGSLGCYLSRKLMLDARENLRLLDRMNRLSPHSCLQDRKDFGLPQEMVEGDQLQKDQAFSVLYEMLQQSFNVFHTERSSAAWNTTLLEQLCTGLQQQLDHLDTCRGPVMGEKDSELGKMDPIVTVKKYFQGIHDYLQEKGYSDCAWEIVRVEMMRALTSSTTLQKRLTKTGGDLNSP.

Residues 1-23 (MAFVLSLLMALVLVSYGPGGSLG) form the signal peptide. 2 cysteine pairs are disulfide-bonded: Cys-24–Cys-122 and Cys-52–Cys-162. Asn-101 carries N-linked (GlcNAc...) asparagine glycosylation.

This sequence belongs to the alpha/beta interferon family. IFN-alphaII subfamily. Constitutively and exclusively expressed in the mononuclear cells of the extraembryonic trophectoderm.

Its subcellular location is the secreted. In terms of biological role, paracrine hormone primarily responsible for maternal recognition of pregnancy. Interacts with endometrial receptors, probably type I interferon receptors, and blocks estrogen receptor expression, preventing the estrogen-induced increase in oxytocin receptor expression in the endometrium. This results in the suppression of the pulsatile endometrial release of the luteolytic hormone prostaglandin F2-alpha, hindering the regression of the corpus luteum (luteolysis) and therefore a return to ovarian cyclicity. This, and a possible direct effect of IFN-tau on prostaglandin synthesis, leads in turn to continued ovarian progesterone secretion, which stimulates the secretion by the endometrium of the nutrients required for the growth of the conceptus. In summary, displays particularly high antiviral and antiproliferative potency concurrently with particular weak cytotoxicity, high antiluteolytic activity and immunomodulatory properties. In contrast with other IFNs, IFN-tau is not virally inducible. In Ovis aries (Sheep), this protein is Interferon tau-6 (IFNT6).